Consider the following 1093-residue polypeptide: Error-prone DNA polymerase (1093 aa).

The disordered stretch occupies residues 1 to 55; it reads MGWFNGPPSWAEMERVLDSKPRRAGESAAPEPDGPLSRGRATYRPPDEGRAARSS. Residues 12 to 25 show a composition bias toward basic and acidic residues; the sequence is EMERVLDSKPRRAG.

Belongs to the DNA polymerase type-C family. DnaE2 subfamily.

The protein localises to the cytoplasm. It carries out the reaction DNA(n) + a 2'-deoxyribonucleoside 5'-triphosphate = DNA(n+1) + diphosphate. Its function is as follows. DNA polymerase involved in damage-induced mutagenesis and translesion synthesis (TLS). It is not the major replicative DNA polymerase. The chain is Error-prone DNA polymerase from Mycolicibacterium paratuberculosis (strain ATCC BAA-968 / K-10) (Mycobacterium paratuberculosis).